Consider the following 288-residue polypeptide: 4-diphosphocytidyl-2-C-methyl-D-erythritol kinase (288 aa).

Residue Lys-8 is part of the active site. 90–100 (PFGAGLGGGSS) serves as a coordination point for ATP. Asp-132 is an active-site residue.

It belongs to the GHMP kinase family. IspE subfamily.

It carries out the reaction 4-CDP-2-C-methyl-D-erythritol + ATP = 4-CDP-2-C-methyl-D-erythritol 2-phosphate + ADP + H(+). It functions in the pathway isoprenoid biosynthesis; isopentenyl diphosphate biosynthesis via DXP pathway; isopentenyl diphosphate from 1-deoxy-D-xylulose 5-phosphate: step 3/6. Its function is as follows. Catalyzes the phosphorylation of the position 2 hydroxy group of 4-diphosphocytidyl-2C-methyl-D-erythritol. In Chlorobium chlorochromatii (strain CaD3), this protein is 4-diphosphocytidyl-2-C-methyl-D-erythritol kinase.